The chain runs to 296 residues: CDP-diacylglycerol--glycerol-3-phosphate 3-phosphatidyltransferase 1, chloroplastic/mitochondrial (296 aa).

A chloroplast and mitochondrion-targeting transit peptide spans 1 to 39 (MLRSGLASLIVDVNLRRTLRPSPTFSFPAHLSRCIITSR). Positions 62-82 (FSSSSSSEQSRPTSSSRNSFS) are enriched in low complexity. The tract at residues 62–103 (FSSSSSSEQSRPTSSSRNSFSGHGQLDSDDNSSPPPSQSSSK) is disordered. 5 consecutive transmembrane segments (helical) span residues 104-124 (VLTL…LLVA), 126-146 (FYVD…AAAI), 164-184 (FGAF…LILL), 189-209 (IQVA…IAII), and 261-281 (VGWL…LSVW).

The protein belongs to the CDP-alcohol phosphatidyltransferase class-I family. The cofactor is Mn(2+).

Its subcellular location is the plastid. It localises to the chloroplast membrane. The protein resides in the mitochondrion membrane. The enzyme catalyses a CDP-1,2-diacyl-sn-glycerol + sn-glycerol 3-phosphate = a 1,2-diacyl-sn-glycero-3-phospho-(1'-sn-glycero-3'-phosphate) + CMP + H(+). The protein operates within phospholipid metabolism; phosphatidylglycerol biosynthesis; phosphatidylglycerol from CDP-diacylglycerol: step 1/2. In terms of biological role, catalyzes the committed step to the synthesis of the acidic phospholipids, including phosphatidylglycerol (PG). Transfers specifically a phosphatidyl group from CDP-diacylglycerol to glycerol-3-phosphate to form phosphatidylglycerophosphate. Cannot catalyze the phosphatidyl group transfer to inositol, serine, choline or phosphatidylglycerol. Possesses high activity with CDP-dipalmitoylglycerol and low activity with CDP-dioleoylglycerol. Essential for chloroplast differentiation and PG accumulation in thylakoids, an essential process for the assembly of antenna-reaction center complexes to optimize energy transfer from antenna pigments, and for subsequent photochemical efficiency of photosystem II (PSII). During cold acclimation (at 5 degrees Celsius), necessary for the photosystem I (PSI) photochemistry, including both reaction center and light-harvesting integrity. But dispensable in mitochondrion, being redundant with PGPS2 for the production of PG and its derivative cardiolipin (CL) in mitochondrial membranes. Together with PGPS2, required for the proper embryo development by providing PG accurate levels. The polypeptide is CDP-diacylglycerol--glycerol-3-phosphate 3-phosphatidyltransferase 1, chloroplastic/mitochondrial (Arabidopsis thaliana (Mouse-ear cress)).